The primary structure comprises 145 residues: Putative nickel-responsive regulator (145 aa).

4 residues coordinate Ni(2+): His77, His88, His90, and Cys96.

It belongs to the transcriptional regulatory CopG/NikR family. Ni(2+) is required as a cofactor.

Functionally, transcriptional regulator. The sequence is that of Putative nickel-responsive regulator from Rhizobium rhizogenes (strain K84 / ATCC BAA-868) (Agrobacterium radiobacter).